We begin with the raw amino-acid sequence, 123 residues long: Large ribosomal subunit protein uL14 (123 aa).

It belongs to the universal ribosomal protein uL14 family. In terms of assembly, part of the 50S ribosomal subunit. Forms a cluster with proteins L3 and L19. In the 70S ribosome, L14 and L19 interact and together make contacts with the 16S rRNA in bridges B5 and B8.

Its function is as follows. Binds to 23S rRNA. Forms part of two intersubunit bridges in the 70S ribosome. The polypeptide is Large ribosomal subunit protein uL14 (Escherichia coli O139:H28 (strain E24377A / ETEC)).